A 416-amino-acid chain; its full sequence is Putative serine protease HhoB (416 aa).

The N-terminal stretch at 1-25 (MAIHLKASHLGVAVLLLLFGGAIGA) is a signal peptide. Polar residues predominate over residues 35–53 (GQNHSSPDSPVNTSPQSLT). A disordered region spans residues 35 to 57 (GQNHSSPDSPVNTSPQSLTPAPV). The PDZ domain occupies 320–398 (EMTKQLRTSG…PLAIAVKRGQ (79 aa)).

It belongs to the peptidase S1C family.

In terms of biological role, a putative protease, its function overlaps that of the related putative proteases HtrA and HhoA. This chain is Putative serine protease HhoB (hhoB), found in Synechocystis sp. (strain ATCC 27184 / PCC 6803 / Kazusa).